The chain runs to 225 residues: Small ribosomal subunit protein uS3 (225 aa).

The region spanning 38–106 (LRGHLRKKLS…DVALNIVEIR (69 aa)) is the KH type-2 domain.

Belongs to the universal ribosomal protein uS3 family. As to quaternary structure, part of the 30S ribosomal subunit. Forms a tight complex with proteins S10 and S14.

Its function is as follows. Binds the lower part of the 30S subunit head. Binds mRNA in the 70S ribosome, positioning it for translation. This chain is Small ribosomal subunit protein uS3, found in Granulibacter bethesdensis (strain ATCC BAA-1260 / CGDNIH1).